The sequence spans 561 residues: Developmental and secondary metabolism regulator veA (561 aa).

Disordered regions lie at residues 1 to 23 (MANR…RITR), 41 to 60 (ARAC…VDPP), and 258 to 361 (AYAR…PQGI). Positions 12-23 (NETEHSVSRITR) are enriched in basic and acidic residues. A Velvet domain is found at 25 to 233 (GKQLTYKLSV…AEQGCRVRIR (209 aa)). The short motif at 39–44 (ERARAC) is the Nuclear localization signal element. Over residues 258–268 (AYARSSDRFTT) the composition is skewed to basic and acidic residues. Positions 324-339 (SHSQTPSYQSHLSFGS) are enriched in polar residues. Pro residues predominate over residues 347 to 357 (PHMPPTPPPVA). Positions 438 to 485 (RPQTPNLPAMPPPKPLSNDYANHVVPSVECTSPGGSGGGGYDNVRGKR) are PEST. Residues 491–524 (GPTYGKRSHEDTFGLDDRSMQNGMRPDTEPYPAY) form a disordered region. Basic and acidic residues predominate over residues 497 to 509 (RSHEDTFGLDDRS).

The protein belongs to the velvet family. VeA subfamily. In terms of assembly, component of the heterotrimeric velvet complex composed of laeA, veA and velB; velA acting as a bridging protein between laeA and velB. Interacts with kapA. Interacts with vosA and velc.

Its subcellular location is the nucleus. It is found in the cytoplasm. Its function is as follows. Component of the velvet transcription factor complex that controls sexual/asexual developmental ratio in response to light, promoting sexual development in the darkness while stimulating asexual sporulation under illumination. The velvet complex acts as a global regulator for secondary metabolite gene expression. Controls the expression of the penicillin gene cluster. Positively controls the expression of the class V chitinase chiB1. Positively controls the expression of the transcription factor atfA. Required for cell wall integrity and controls hyphal branching. The polypeptide is Developmental and secondary metabolism regulator veA (Penicillium rubens (strain ATCC 28089 / DSM 1075 / NRRL 1951 / Wisconsin 54-1255) (Penicillium chrysogenum)).